An 811-amino-acid polypeptide reads, in one-letter code: Bifunctional enzyme MurC/Ddl (811 aa).

Residues methionine 1–lysine 450 form a UDP-N-acetylmuramate--alanine ligase region. Residues glycine 111–threonine 117 and leucine 607–isoleucine 662 each bind ATP. A D-alanine--D-alanine ligase region spans residues lysine 451–serine 811. The region spanning lysine 574–isoleucine 785 is the ATP-grasp domain. Aspartate 739, glutamate 752, and asparagine 754 together coordinate Mg(2+).

It in the N-terminal section; belongs to the MurCDEF family. In the C-terminal section; belongs to the D-alanine--D-alanine ligase family. It depends on Mg(2+) as a cofactor. Requires Mn(2+) as cofactor.

It is found in the cytoplasm. The catalysed reaction is UDP-N-acetyl-alpha-D-muramate + L-alanine + ATP = UDP-N-acetyl-alpha-D-muramoyl-L-alanine + ADP + phosphate + H(+). The enzyme catalyses 2 D-alanine + ATP = D-alanyl-D-alanine + ADP + phosphate + H(+). Its pathway is cell wall biogenesis; peptidoglycan biosynthesis. The protein is Bifunctional enzyme MurC/Ddl (murC/ddlA) of Chlamydia caviae (strain ATCC VR-813 / DSM 19441 / 03DC25 / GPIC) (Chlamydophila caviae).